Here is a 61-residue protein sequence, read N- to C-terminus: Metallothionein-II, hippocampal (61 aa).

Residue Met-1 is modified to N-acetylmethionine. The beta stretch occupies residues 1-29 (MDPNCSCATGGSCTCANSCTCKACKCASC). Residues Cys-5, Cys-7, Cys-13, Cys-15, Cys-19, Cys-21, Cys-24, Cys-26, Cys-29, Cys-33, Cys-34, Cys-36, Cys-37, Cys-41, Cys-44, Cys-48, Cys-50, Cys-57, Cys-59, and Cys-60 each coordinate a divalent metal cation. Residues 30–61 (KKSCCSCCPVGCAKCAQGCICKGASDKCSCCA) form an alpha region.

The protein belongs to the metallothionein superfamily. Type 1 family.

Functionally, metallothioneins have a high content of cysteine residues that bind various heavy metals; these proteins are transcriptionally regulated by both heavy metals and glucocorticoids. This isoform may play a role in regulating the transport, accumulation, and compartmentation of zinc in the hippocampus. The sequence is that of Metallothionein-II, hippocampal from Bos taurus (Bovine).